A 375-amino-acid polypeptide reads, in one-letter code: Alcohol dehydrogenase 4, mitochondrial (375 aa).

The N-terminal 27 residues, 1–27 (MFRLARAQTALANKASVSRSFLRLNSS), are a transit peptide targeting the mitochondrion. Zn(2+)-binding residues include Cys-71, His-94, Cys-125, Cys-128, Cys-131, Cys-139, and Cys-181. Residues 205–211 (GAAGGLG), Asp-229, Lys-234, 296–298 (VGL), and Arg-368 each bind NAD(+).

The protein belongs to the zinc-containing alcohol dehydrogenase family. Homotetramer. The cofactor is Zn(2+).

The protein localises to the mitochondrion matrix. The catalysed reaction is a primary alcohol + NAD(+) = an aldehyde + NADH + H(+). It carries out the reaction a secondary alcohol + NAD(+) = a ketone + NADH + H(+). This Kluyveromyces lactis (strain ATCC 8585 / CBS 2359 / DSM 70799 / NBRC 1267 / NRRL Y-1140 / WM37) (Yeast) protein is Alcohol dehydrogenase 4, mitochondrial (ADH4).